Reading from the N-terminus, the 102-residue chain is ATP synthase subunit c (102 aa).

Transmembrane regions (helical) follow at residues 34–54 (IGAG…GYIF) and 80–100 (AVSE…IFVA).

Belongs to the ATPase C chain family. F-type ATPases have 2 components, F(1) - the catalytic core - and F(0) - the membrane proton channel. F(1) has five subunits: alpha(3), beta(3), gamma(1), delta(1), epsilon(1). F(0) has three main subunits: a(1), b(2) and c(10-14). The alpha and beta chains form an alternating ring which encloses part of the gamma chain. F(1) is attached to F(0) by a central stalk formed by the gamma and epsilon chains, while a peripheral stalk is formed by the delta and b chains.

The protein resides in the cell membrane. Functionally, f(1)F(0) ATP synthase produces ATP from ADP in the presence of a proton or sodium gradient. F-type ATPases consist of two structural domains, F(1) containing the extramembraneous catalytic core and F(0) containing the membrane proton channel, linked together by a central stalk and a peripheral stalk. During catalysis, ATP synthesis in the catalytic domain of F(1) is coupled via a rotary mechanism of the central stalk subunits to proton translocation. Its function is as follows. Key component of the F(0) channel; it plays a direct role in translocation across the membrane. A homomeric c-ring of between 10-14 subunits forms the central stalk rotor element with the F(1) delta and epsilon subunits. The chain is ATP synthase subunit c from Mycoplasma genitalium (strain ATCC 33530 / DSM 19775 / NCTC 10195 / G37) (Mycoplasmoides genitalium).